The sequence spans 508 residues: Fc receptor-like protein 2 (508 aa).

Residues 1–19 (MLLWSLLVIFDAVTEQADS) form the signal peptide. 4 Ig-like C2-type domains span residues 20–98 (LTLV…SNIV), 109–187 (PVLT…HRIR), 201–290 (PISN…KVVN), and 300–387 (PVLT…VSIS). Over 20–401 (LTLVAPSSVF…YRRDLMTAGV (382 aa)) the chain is Extracellular. An intrachain disulfide couples Cys128 to Cys177. Residues Asn204, Asn234, Asn343, Asn355, and Asn365 are each glycosylated (N-linked (GlcNAc...) asparagine). 2 disulfides stabilise this stretch: Cys226–Cys275 and Cys321–Cys368. A helical transmembrane segment spans residues 402 to 422 (LWGLFGVLGFTGVALLLYALF). The Cytoplasmic segment spans residues 423–508 (HKISGESSAT…QVIYSSVKKS (86 aa)). Residues 429 to 453 (SSATNEPRGASRPNPQEFTYSSPTP) are disordered. A compositionally biased stretch (polar residues) spans 441–452 (PNPQEFTYSSPT). Short sequence motifs (ITIM motif) lie at residues 446 to 451 (FTYSSP), 460 to 465 (PVYVNV), 472 to 477 (VVYSQV), and 500 to 505 (VIYSSV).

As to quaternary structure, the tyrosine-phosphorylated isoform 2 interacts with PTPN6. Post-translationally, isoform 2 is N- and O-glycosylated, and phosphorylated. Expressed in the secondary lymphoid organs, spleen and lymph node. Expression is limited to the mature B-cell lines. Highly expressed in CD19 and within the mantle zones of the tonsil tissue. Isoform 2 is expressed in the spleen, peripheral blood and bone marrow. Isoform 2 and isoform 4 are expressed in B-cell lines. Preferentially expressed in memory B-cells (at protein level).

Its subcellular location is the cell membrane. Its function is as follows. May have an regulatory role in normal and neoplastic B cell development. The chain is Fc receptor-like protein 2 (FCRL2) from Homo sapiens (Human).